Here is a 197-residue protein sequence, read N- to C-terminus: Ribonuclease HII (197 aa).

The RNase H type-2 domain maps to N11–L197. A divalent metal cation-binding residues include D17, E18, and D109.

It belongs to the RNase HII family. The cofactor is Mn(2+). Requires Mg(2+) as cofactor.

Its subcellular location is the cytoplasm. The catalysed reaction is Endonucleolytic cleavage to 5'-phosphomonoester.. Functionally, endonuclease that specifically degrades the RNA of RNA-DNA hybrids. The chain is Ribonuclease HII from Haemophilus ducreyi (strain 35000HP / ATCC 700724).